Here is a 187-residue protein sequence, read N- to C-terminus: uncharacterized protein (187 aa).

Residues 8-28 traverse the membrane as a helical segment; sequence ITFFIILLICLICILLLLVVF. The interval 99-153 is disordered; the sequence is PLENRRDMEAEEENQINEKQEPENAGETGQEEDDGLQKIHTSVTRTPSVVESQKR. The segment covering 137–149 has biased composition (polar residues); sequence IHTSVTRTPSVVE.

The protein resides in the membrane. This is an uncharacterized protein from Homo sapiens (Human).